The primary structure comprises 139 residues: Endoribonuclease YbeY (139 aa).

Residues His-99, His-103, and His-109 each contribute to the Zn(2+) site.

This sequence belongs to the endoribonuclease YbeY family. Zn(2+) serves as cofactor.

It localises to the cytoplasm. Single strand-specific metallo-endoribonuclease involved in late-stage 70S ribosome quality control and in maturation of the 3' terminus of the 16S rRNA. The polypeptide is Endoribonuclease YbeY (Sulfurimonas denitrificans (strain ATCC 33889 / DSM 1251) (Thiomicrospira denitrificans (strain ATCC 33889 / DSM 1251))).